The primary structure comprises 174 residues: Neuromedin-U (174 aa).

The signal sequence occupies residues Met-1 to Gly-34. A propeptide spanning residues Ala-35–Arg-103 is cleaved from the precursor. At Met-139 the chain carries Methionine sulfoxide; partial. Asn-166 carries the asparagine amide modification. A propeptide spanning residues Ser-170–Ile-174 is cleaved from the precursor.

Belongs to the NmU family. In terms of tissue distribution, expressed throughout the enteric nervous system with highest levels being found in the jejunum.

The protein localises to the secreted. Its function is as follows. Ligand for receptors NMUR1 and NMUR2. Stimulates muscle contractions of specific regions of the gastrointestinal tract. In humans, NmU stimulates contractions of the ileum and urinary bladder. Functionally, does not function as a ligand for either NMUR1 or NMUR2. Indirectly induces prolactin release although its potency is much lower than that of neuromedin precursor-related peptide 36. Does not function as a ligand for either NMUR1 or NMUR2. Indirectly induces prolactin release from lactotroph cells in the pituitary gland, probably via the hypothalamic dopaminergic system. This is Neuromedin-U (NMU) from Homo sapiens (Human).